We begin with the raw amino-acid sequence, 704 residues long: ATP-dependent zinc metalloprotease FtsH (704 aa).

Over 1–17 (MADSAKTPRGKKRRPFT) the chain is Cytoplasmic. The helical transmembrane segment at 18 to 38 (GLALWIIVALLLGMAMFSLFG) threads the bilayer. Residues 39–127 (RDGYQQIDTQ…DEIASSSWWS (89 aa)) are Extracellular-facing. Residues 128–148 (TLLLSFLPLLIFIGLFWFLIM) traverse the membrane as a helical segment. The Cytoplasmic portion of the chain corresponds to 149 to 704 (NAQGGGKAMQ…GSAGTDGTGR (556 aa)). 217–224 (GPPGTGKT) lines the ATP pocket. Position 439 (His439) interacts with Zn(2+). Residue Glu440 is part of the active site. Zn(2+)-binding residues include His443 and Asp515. The interval 624–704 (PREVWISSTE…GSAGTDGTGR (81 aa)) is disordered. Positions 681–704 (PHGGEPGGGGYGYDGSAGTDGTGR) are enriched in gly residues.

In the central section; belongs to the AAA ATPase family. It in the C-terminal section; belongs to the peptidase M41 family. In terms of assembly, homohexamer. Zn(2+) serves as cofactor.

The protein resides in the cell membrane. Acts as a processive, ATP-dependent zinc metallopeptidase for both cytoplasmic and membrane proteins. Plays a role in the quality control of integral membrane proteins. This chain is ATP-dependent zinc metalloprotease FtsH, found in Brachybacterium faecium (strain ATCC 43885 / DSM 4810 / JCM 11609 / LMG 19847 / NBRC 14762 / NCIMB 9860 / 6-10).